The sequence spans 296 residues: Regulatory protein PchR (296 aa).

An HTH araC/xylS-type domain is found at 201–296; the sequence is HAARDLLVGA…RYGISPSEIR (96 aa). 2 consecutive DNA-binding regions (H-T-H motif) follow at residues 218–239 and 266–288; these read DTLASRVGMNPRKLTAGFRKVF and VSTVAYRVGYSPAHFSIAFRKRY.

In terms of biological role, positive activator of the genes for pyochelin and ferripyochelin receptors. In Pseudomonas aeruginosa (strain ATCC 15692 / DSM 22644 / CIP 104116 / JCM 14847 / LMG 12228 / 1C / PRS 101 / PAO1), this protein is Regulatory protein PchR (pchR).